Reading from the N-terminus, the 456-residue chain is Cytochrome c biogenesis protein CcsB (456 aa).

The next 3 membrane-spanning stretches (helical) occupy residues 29–49, 88–108, and 174–194; these read LRLA…GTVI, AGWF…CTFR, and VGPI…IWGS.

This sequence belongs to the Ccs1/CcsB family. As to quaternary structure, may interact with CcsA.

The protein resides in the cellular thylakoid membrane. In terms of biological role, required during biogenesis of c-type cytochromes (cytochrome c6 and cytochrome f) at the step of heme attachment. The sequence is that of Cytochrome c biogenesis protein CcsB from Synechococcus sp. (strain ATCC 27144 / PCC 6301 / SAUG 1402/1) (Anacystis nidulans).